The following is a 313-amino-acid chain: 4-hydroxy-3-methylbut-2-enyl diphosphate reductase (313 aa).

A [4Fe-4S] cluster-binding site is contributed by C12. The (2E)-4-hydroxy-3-methylbut-2-enyl diphosphate site is built by H41 and H74. Positions 41 and 74 each coordinate dimethylallyl diphosphate. Positions 41 and 74 each coordinate isopentenyl diphosphate. Position 96 (C96) interacts with [4Fe-4S] cluster. H124 is a binding site for (2E)-4-hydroxy-3-methylbut-2-enyl diphosphate. H124 contacts dimethylallyl diphosphate. H124 is a binding site for isopentenyl diphosphate. Catalysis depends on E126, which acts as the Proton donor. T167 is a binding site for (2E)-4-hydroxy-3-methylbut-2-enyl diphosphate. C197 provides a ligand contact to [4Fe-4S] cluster. (2E)-4-hydroxy-3-methylbut-2-enyl diphosphate-binding residues include S225, S226, N227, and S269. S225, S226, N227, and S269 together coordinate dimethylallyl diphosphate. Residues S225, S226, N227, and S269 each coordinate isopentenyl diphosphate.

Belongs to the IspH family. [4Fe-4S] cluster serves as cofactor.

The enzyme catalyses isopentenyl diphosphate + 2 oxidized [2Fe-2S]-[ferredoxin] + H2O = (2E)-4-hydroxy-3-methylbut-2-enyl diphosphate + 2 reduced [2Fe-2S]-[ferredoxin] + 2 H(+). The catalysed reaction is dimethylallyl diphosphate + 2 oxidized [2Fe-2S]-[ferredoxin] + H2O = (2E)-4-hydroxy-3-methylbut-2-enyl diphosphate + 2 reduced [2Fe-2S]-[ferredoxin] + 2 H(+). Its pathway is isoprenoid biosynthesis; dimethylallyl diphosphate biosynthesis; dimethylallyl diphosphate from (2E)-4-hydroxy-3-methylbutenyl diphosphate: step 1/1. It participates in isoprenoid biosynthesis; isopentenyl diphosphate biosynthesis via DXP pathway; isopentenyl diphosphate from 1-deoxy-D-xylulose 5-phosphate: step 6/6. Its function is as follows. Catalyzes the conversion of 1-hydroxy-2-methyl-2-(E)-butenyl 4-diphosphate (HMBPP) into a mixture of isopentenyl diphosphate (IPP) and dimethylallyl diphosphate (DMAPP). Acts in the terminal step of the DOXP/MEP pathway for isoprenoid precursor biosynthesis. This chain is 4-hydroxy-3-methylbut-2-enyl diphosphate reductase, found in Methylococcus capsulatus (strain ATCC 33009 / NCIMB 11132 / Bath).